We begin with the raw amino-acid sequence, 220 residues long: Inner membrane-spanning protein YciB (220 aa).

6 consecutive transmembrane segments (helical) span residues E20 to A40, I57 to A77, L86 to W106, L123 to F143, K156 to W176, and F187 to I207.

It belongs to the YciB family.

The protein resides in the cell inner membrane. In terms of biological role, plays a role in cell envelope biogenesis, maintenance of cell envelope integrity and membrane homeostasis. The chain is Inner membrane-spanning protein YciB from Brucella anthropi (strain ATCC 49188 / DSM 6882 / CCUG 24695 / JCM 21032 / LMG 3331 / NBRC 15819 / NCTC 12168 / Alc 37) (Ochrobactrum anthropi).